The following is a 221-amino-acid chain: MRTLTVYHLGHIDYTAAWEMQRRLARQRSSGQIGDTLLLLEHPPTITLGNKARPEHIVATPAELAARGVVVVQSDRGGEVTYHAPGQLVAYPIFKLSQHGSDVGRYVRGLEESVIRVLAGYGITGERVNGLTGVWVRGGAAKICAIGVKLSASGVTTHGLALNVDPDLSGFELIVPCGISDRGVTSLAVELGKAPPMAEVADRLIASLCAIFDLRPVNALS.

The 186-residue stretch at 31–216 (GQIGDTLLLL…SLCAIFDLRP (186 aa)) folds into the BPL/LPL catalytic domain. Residues 76–83 (RGGEVTYH), 145–147 (AIG), and 159–161 (GLA) each bind substrate. Cysteine 177 (acyl-thioester intermediate) is an active-site residue.

This sequence belongs to the LipB family.

It localises to the cytoplasm. The catalysed reaction is octanoyl-[ACP] + L-lysyl-[protein] = N(6)-octanoyl-L-lysyl-[protein] + holo-[ACP] + H(+). Its pathway is protein modification; protein lipoylation via endogenous pathway; protein N(6)-(lipoyl)lysine from octanoyl-[acyl-carrier-protein]: step 1/2. Functionally, catalyzes the transfer of endogenously produced octanoic acid from octanoyl-acyl-carrier-protein onto the lipoyl domains of lipoate-dependent enzymes. Lipoyl-ACP can also act as a substrate although octanoyl-ACP is likely to be the physiological substrate. The sequence is that of Octanoyltransferase from Chloroflexus aggregans (strain MD-66 / DSM 9485).